The chain runs to 546 residues: Chaperonin GroEL (546 aa).

Residues 30–33 (TLGP), K51, 87–91 (DGTTT), G415, and D496 contribute to the ATP site. The interval 526–546 (PQKDAPAGGGMPDMGGMGGMM) is disordered. A compositionally biased stretch (gly residues) spans 532 to 546 (AGGGMPDMGGMGGMM).

Belongs to the chaperonin (HSP60) family. In terms of assembly, forms a cylinder of 14 subunits composed of two heptameric rings stacked back-to-back. Interacts with the co-chaperonin GroES.

It localises to the cytoplasm. The enzyme catalyses ATP + H2O + a folded polypeptide = ADP + phosphate + an unfolded polypeptide.. Together with its co-chaperonin GroES, plays an essential role in assisting protein folding. The GroEL-GroES system forms a nano-cage that allows encapsulation of the non-native substrate proteins and provides a physical environment optimized to promote and accelerate protein folding. In Ruegeria pomeroyi (strain ATCC 700808 / DSM 15171 / DSS-3) (Silicibacter pomeroyi), this protein is Chaperonin GroEL.